Here is a 536-residue protein sequence, read N- to C-terminus: Berberine bridge enzyme-like 2 (536 aa).

The signal sequence occupies residues Met-1–Ala-20. Residues Cys-35 and Cys-98 are joined by a disulfide bond. Asn-38, Asn-73, Asn-136, Asn-266, Asn-334, and Asn-352 each carry an N-linked (GlcNAc...) asparagine glycan. Residues Ala-76–Val-250 enclose the FAD-binding PCMH-type domain. Residues His-113–Cys-175 constitute a cross-link (6-(S-cysteinyl)-8alpha-(pros-histidyl)-FAD (His-Cys)).

Belongs to the oxygen-dependent FAD-linked oxidoreductase family. Requires FAD as cofactor. Post-translationally, the FAD cofactor is bound via a bicovalent 6-S-cysteinyl, 8alpha-N1-histidyl FAD linkage.

Its subcellular location is the secreted. It is found in the cell wall. The polypeptide is Berberine bridge enzyme-like 2 (Arabidopsis thaliana (Mouse-ear cress)).